Reading from the N-terminus, the 261-residue chain is Kynurenine formamidase (261 aa).

Position 9 is a phosphoserine (serine 9). An HGGXW motif is present at residues 36 to 40 (HGGAW). Serine 110 serves as the catalytic Nucleophile. Active-site residues include aspartate 211 and histidine 243.

The protein belongs to the kynurenine formamidase family. As to quaternary structure, homodimer.

It carries out the reaction N-formyl-L-kynurenine + H2O = L-kynurenine + formate + H(+). It participates in amino-acid degradation; L-tryptophan degradation via kynurenine pathway; L-kynurenine from L-tryptophan: step 2/2. Catalyzes the hydrolysis of N-formyl-L-kynurenine to L-kynurenine, the second step in the kynurenine pathway of tryptophan degradation. Kynurenine may be further oxidized to nicotinic acid, NAD(H) and NADP(H). Required for elimination of toxic metabolites. In Saccharomyces cerevisiae (strain ATCC 204508 / S288c) (Baker's yeast), this protein is Kynurenine formamidase.